The sequence spans 917 residues: Auxin response factor 17 (917 aa).

The TF-B3 DNA-binding region spans 134–236 (FCKTLTASDT…QLLLGIRRAN (103 aa)). The disordered stretch occupies residues 571 to 649 (SVPNALSPFS…RPTAVPVPDP (79 aa)). Composition is skewed to low complexity over residues 576–594 (LSPF…MTLQ) and 604–620 (SYPD…NTST). Positions 786-870 (ATFVKVYKSG…SCIKILSPQE (85 aa)) constitute a PB1 domain.

This sequence belongs to the ARF family. As to quaternary structure, homodimers and heterodimers.

The protein localises to the nucleus. Its function is as follows. Auxin response factors (ARFs) are transcriptional factors that bind specifically to the DNA sequence 5'-TGTCTC-3' found in the auxin-responsive promoter elements (AuxREs). The polypeptide is Auxin response factor 17 (ARF17) (Oryza sativa subsp. indica (Rice)).